A 589-amino-acid polypeptide reads, in one-letter code: PTS system mannitol-specific EIICB component (589 aa).

At 1–25 (MEEKVSLKVRVQKLGTSLSNMVMPN) the chain is on the cytoplasmic side. Residues 14-347 (LGTSLSNMVM…LHADKSTEDS (334 aa)) form the PTS EIIC type-2 domain. Residues 26–47 (IGAFIAWGVLTALFIADGYLPN) form a helical membrane-spanning segment. Over 48–51 (EQLA) the chain is Extracellular. Residues 52–72 (TVVGPMLTYLLPILIGYTGGY) traverse the membrane as a helical segment. Topologically, residues 73-135 (MIHGQRGAVV…PGFEMLVNNF (63 aa)) are cytoplasmic. Residues 136–157 (SAGLVGFALLLLAFYAIGPVVS) traverse the membrane as a helical segment. Residues 158-166 (TLTGAVGNG) are Extracellular-facing. The chain crosses the membrane as a helical span at residues 167 to 187 (VEAIVNARLLPMANIIIEPAK). Over 188 to 274 (VLFLNNALNH…VMMKPTLFLA (87 aa)) the chain is Cytoplasmic. A helical membrane pass occupies residues 275 to 294 (AMAGGISGTFTFQLLDAGLK). The Extracellular segment spans residues 295–316 (SPASPGSIIAIMATAPKGVWPH). A helical membrane pass occupies residues 317–338 (LNILLGVLVAAVVSFLIAALIL). Residues 339-589 (HADKSTEDSL…YDKMAARMYK (251 aa)) are Cytoplasmic-facing. The 96-residue stretch at 381–476 (EKIIFACDAG…SLTGASPIAE (96 aa)) folds into the PTS EIIB type-2 domain. Cys387 (phosphocysteine intermediate; for EIIB activity) is an active-site residue. Cys387 carries the phosphocysteine; by EIIA modification.

As to quaternary structure, homodimer.

It is found in the cell membrane. It catalyses the reaction D-mannitol(out) + N(pros)-phospho-L-histidyl-[protein] = D-mannitol 1-phosphate(in) + L-histidyl-[protein]. The phosphoenolpyruvate-dependent sugar phosphotransferase system (sugar PTS), a major carbohydrate active transport system, catalyzes the phosphorylation of incoming sugar substrates concomitantly with their translocation across the cell membrane. The enzyme II CmtAB PTS system is involved in D-mannitol transport. The sequence is that of PTS system mannitol-specific EIICB component (mtlA) from Streptococcus pneumoniae (strain ATCC BAA-255 / R6).